We begin with the raw amino-acid sequence, 365 residues long: Protein BIIDXI (365 aa).

The signal sequence occupies residues 1–21 (MKEMGVIVLLLLHSFFYVAFC). N-linked (GlcNAc...) asparagine glycosylation is found at Asn-48, Asn-121, and Asn-208.

Interacts with PME3. Mainly expressed in vascular tissues of roots, leaves, stamens and petals.

The protein localises to the secreted. Its subcellular location is the cell wall. Together with At5g11420, acts as a positive regulator of PME3 activity during several developmental processes, including reproductive organ development, hypocotyls elongation, seed germination and endosperm (testa) rupture at the micropyle, probably by modulating the pectin methylation status in cell walls. Involved in the regulation of pectin methylation degree to modulate cell wall physiology during cell separation, hypocotyl growth and embryo development. Required during embryo development, especially to regulate homogalacturonans (HG) methyl esterification in endosperm cell walls, a process related to embryo bending. Also implicated in hypocotyl growth and gravitropic response via the regulation of auxin efflux. Also regulates cell wall pectin upon root-knot nematode Meloidogyne incognita infection. In Arabidopsis thaliana (Mouse-ear cress), this protein is Protein BIIDXI.